A 376-amino-acid chain; its full sequence is Deoxyuridine 5'-triphosphate nucleotidohydrolase (376 aa).

Belongs to the dUTPase family. Mg(2+) serves as cofactor.

It carries out the reaction dUTP + H2O = dUMP + diphosphate + H(+). Functionally, involved in nucleotide metabolism: produces dUMP, the immediate precursor of thymidine nucleotides and decreases the intracellular concentration of dUTP to avoid uracil incorporation into viral DNA. The sequence is that of Deoxyuridine 5'-triphosphate nucleotidohydrolase from Human herpesvirus 6B (strain Z29) (HHV-6 variant B).